A 73-amino-acid polypeptide reads, in one-letter code: MKRLQIYIDEDVDRALAVEARRRRTSKAALIREYVAEHLRQPGPDPVDAFVGSFVGEADLSASVDDVVYGKHE.

Antitoxin component of a type II toxin-antitoxin (TA) system. Upon expression in E.coli neutralizes the toxic effect of cognate toxin VapC20. The chain is Antitoxin VapB20 (vapB20) from Mycobacterium tuberculosis (strain ATCC 25618 / H37Rv).